The sequence spans 547 residues: Sodium-coupled neutral amino acid transporter 4 (547 aa).

The disordered stretch occupies residues 1-34 (MDPMELNNVSIEPDGDSCSGDSIQDSYTGMENSD). The Extracellular portion of the chain corresponds to 1-104 (MDPMELNNVS…GLSYAMANTG (104 aa)). Residues 19–31 (SGDSIQDSYTGME) are compositionally biased toward polar residues. The residue at position 49 (serine 49) is a Phosphoserine. Residues 105–125 (IILFIIMLLTVAILSLYSVHL) traverse the membrane as a helical segment. The Cytoplasmic portion of the chain corresponds to 126-151 (LLKTAKEGGSLIYEKLGEKAFGWPGK). The helical transmembrane segment at 152–172 (IGAFISITMQNIGAMSSYLFI) threads the bilayer. At 173–195 (IKYELPEVIRAFMGLEENTGEWY) the chain is on the extracellular side. A helical membrane pass occupies residues 196-216 (LNGNYLVLFVSVGIILPLSLL). Over 217-220 (KNLG) the chain is Cytoplasmic. The helical transmembrane segment at 221–241 (YLGYTSGFSLSCMVFFVSVVI) threads the bilayer. Residues 242-332 (YKKFQIPCPL…PKYFVFNSRT (91 aa)) are Extracellular-facing. Residues cysteine 249 and cysteine 321 are joined by a disulfide bond. N-linked (GlcNAc...) asparagine glycans are attached at residues asparagine 260, asparagine 264, and asparagine 276. A helical transmembrane segment spans residues 333-353 (AYAIPILAFAFVCHPEVLPIY). Residues 354 to 369 (SELKDRSRRKMQTVSN) are Cytoplasmic-facing. Residues 370-390 (ISISGMLVMYLLAALFGYLSF) traverse the membrane as a helical segment. The Extracellular portion of the chain corresponds to 391 to 411 (YGDVEDELLHAYSKVYTFDTA). The helical transmembrane segment at 412–432 (LLMVRLAVLVAVTLTVPIVLF) threads the bilayer. Topologically, residues 433 to 453 (PIRTSVITLLFPRKPFSWLKH) are cytoplasmic. A helical membrane pass occupies residues 454–474 (FGIAAIIIALNNILVILVPTI). Topologically, residues 475-476 (KY) are extracellular. A helical transmembrane segment spans residues 477–497 (IFGFIGASSATMLIFILPAAF). The Cytoplasmic portion of the chain corresponds to 498 to 514 (YLKLVKKEPLRSPQKIG). A helical transmembrane segment spans residues 515–535 (ALVFLVTGIIFMMGSMALIIL). Residues 536–547 (DWIYNPPNPNHH) lie on the Extracellular side of the membrane.

It belongs to the amino acid/polyamine transporter 2 family. The disulfide bond plays an important role in substrate transport, but has no effect on trafficking to the cell surface. Detected in liver, in hepatocytes surrounding the central vein. Not detected in heart, kidney, brain, lung, small intestine, spleen and thymus. Highly expressed in placenta.

The protein localises to the cell membrane. The protein resides in the cell projection. It localises to the microvillus membrane. It carries out the reaction L-alanine(in) + Na(+)(in) = L-alanine(out) + Na(+)(out). The enzyme catalyses L-methionine(in) + Na(+)(in) = L-methionine(out) + Na(+)(out). It catalyses the reaction L-asparagine(in) + Na(+)(in) = L-asparagine(out) + Na(+)(out). The catalysed reaction is L-threonine(in) + Na(+)(in) = L-threonine(out) + Na(+)(out). It carries out the reaction L-serine(in) + Na(+)(in) = L-serine(out) + Na(+)(out). The enzyme catalyses glycine(in) + Na(+)(in) = glycine(out) + Na(+)(out). It catalyses the reaction L-glutamine(in) + Na(+)(in) = L-glutamine(out) + Na(+)(out). The catalysed reaction is L-histidine(in) + Na(+)(in) = L-histidine(out) + Na(+)(out). It carries out the reaction L-cysteine(in) + Na(+)(in) = L-cysteine(out) + Na(+)(out). The enzyme catalyses L-proline(in) + Na(+)(in) = L-proline(out) + Na(+)(out). Its function is as follows. Symporter that cotransports neutral amino acids and sodium ions from the extraccellular to the intracellular side of the cell membrane. The transport is electrogenic, pH dependent and partially tolerates substitution of Na(+) by Li(+). Preferentially transports smaller amino acids, such as glycine, L-alanine, L-serine, L-asparagine and L-threonine, followed by L-cysteine, L-histidine, L-proline and L-glutamine and L-methionine. In Mus musculus (Mouse), this protein is Sodium-coupled neutral amino acid transporter 4.